A 178-amino-acid chain; its full sequence is Probable coatomer subunit zeta-B (178 aa).

Belongs to the adaptor complexes small subunit family. In terms of assembly, oligomeric complex that consists of at least the alpha, beta, beta', gamma, delta, epsilon and zeta subunits.

The protein resides in the cytoplasm. The protein localises to the golgi apparatus membrane. It localises to the cytoplasmic vesicle. It is found in the COPI-coated vesicle membrane. In terms of biological role, the coatomer is a cytosolic protein complex that binds to dilysine motifs and reversibly associates with Golgi non-clathrin-coated vesicles, which further mediate biosynthetic protein transport from the ER, via the Golgi up to the trans Golgi network. Coatomer complex is required for budding from Golgi membranes, and is essential for the retrograde Golgi-to-ER transport of dilysine-tagged proteins. The zeta subunit may be involved in regulating the coat assembly and, hence, the rate of biosynthetic protein transport due to its association-dissociation properties with the coatomer complex. This Dictyostelium discoideum (Social amoeba) protein is Probable coatomer subunit zeta-B (copZb).